A 221-amino-acid polypeptide reads, in one-letter code: Small ribosomal subunit protein uS4c (221 aa).

Positions 26–53 (RKRTDNRCMPGQHRKKRNDSTKKTKNSK) are disordered. The segment covering 37–53 (QHRKKRNDSTKKTKNSK) has biased composition (basic residues). The 59-residue stretch at 103–161 (MRLDNIVFRLGMAPTIPAARQLVNHGHIVVNNKKVDISSYQCQSQDVISVTKNKTIRTL) folds into the S4 RNA-binding domain.

It belongs to the universal ribosomal protein uS4 family. In terms of assembly, part of the 30S ribosomal subunit. Contacts protein S5. The interaction surface between S4 and S5 is involved in control of translational fidelity.

Its subcellular location is the plastid. The protein resides in the chloroplast. Functionally, one of the primary rRNA binding proteins, it binds directly to 16S rRNA where it nucleates assembly of the body of the 30S subunit. Its function is as follows. With S5 and S12 plays an important role in translational accuracy. The sequence is that of Small ribosomal subunit protein uS4c (rps4) from Pleurastrum terricola (Filamentous green alga).